The sequence spans 131 residues: Hydrogenase maturation factor HypA (131 aa).

Residue H2 participates in Ni(2+) binding. The Zn(2+) site is built by C74, C77, C91, and C94.

Belongs to the HypA/HybF family.

Functionally, involved in the maturation of [NiFe] hydrogenases. Required for nickel insertion into the metal center of the hydrogenase. The sequence is that of Hydrogenase maturation factor HypA from Streptomyces avermitilis (strain ATCC 31267 / DSM 46492 / JCM 5070 / NBRC 14893 / NCIMB 12804 / NRRL 8165 / MA-4680).